Reading from the N-terminus, the 50-residue chain is MREAIHLGCEKCTRRNYHTTKNKKTHTEKFSVKKYCKFCREHTLHKEMKL.

Belongs to the bacterial ribosomal protein bL33 family.

The protein is Large ribosomal subunit protein bL33 of Sulfurimonas denitrificans (strain ATCC 33889 / DSM 1251) (Thiomicrospira denitrificans (strain ATCC 33889 / DSM 1251)).